The sequence spans 279 residues: uncharacterized protein (279 aa).

Residues 1 to 77 (MGILEQLENP…VTLAKEISNK (77 aa)) form the HTH rpiR-type domain. Residues 37–56 (ISIIAKESGVGEATITRFTK) constitute a DNA-binding region (H-T-H motif). The SIS domain occupies 123–263 (CRDLIMNAKR…YTEVIKEMFS (141 aa)).

This is an uncharacterized protein from Clostridium perfringens (strain 13 / Type A).